The primary structure comprises 149 residues: Large ribosomal subunit protein uL22c (149 aa).

It belongs to the universal ribosomal protein uL22 family. As to quaternary structure, part of the 50S ribosomal subunit.

Its subcellular location is the plastid. It is found in the chloroplast. Its function is as follows. This protein binds specifically to 23S rRNA. Functionally, the globular domain of the protein is located near the polypeptide exit tunnel on the outside of the subunit, while an extended beta-hairpin is found that lines the wall of the exit tunnel in the center of the 70S ribosome. This is Large ribosomal subunit protein uL22c (rpl22) from Brachypodium distachyon (Purple false brome).